Reading from the N-terminus, the 200-residue chain is Holliday junction branch migration complex subunit RuvA (200 aa).

The segment at 1-64 (MIGQLTGLVG…EDAIQLFGFA (64 aa)) is domain I. The tract at residues 65-143 (TTDERDWFRL…KMPGGGGTVS (79 aa)) is domain II. Residues 144–148 (APGIV) are flexible linker. A domain III region spans residues 149–200 (SGPSVENDALLALAGLGFRRAEAWPVLSKVLAENENATLDLAIRLSLKDLAR).

It belongs to the RuvA family. As to quaternary structure, homotetramer. Forms an RuvA(8)-RuvB(12)-Holliday junction (HJ) complex. HJ DNA is sandwiched between 2 RuvA tetramers; dsDNA enters through RuvA and exits via RuvB. An RuvB hexamer assembles on each DNA strand where it exits the tetramer. Each RuvB hexamer is contacted by two RuvA subunits (via domain III) on 2 adjacent RuvB subunits; this complex drives branch migration. In the full resolvosome a probable DNA-RuvA(4)-RuvB(12)-RuvC(2) complex forms which resolves the HJ.

The protein resides in the cytoplasm. The RuvA-RuvB-RuvC complex processes Holliday junction (HJ) DNA during genetic recombination and DNA repair, while the RuvA-RuvB complex plays an important role in the rescue of blocked DNA replication forks via replication fork reversal (RFR). RuvA specifically binds to HJ cruciform DNA, conferring on it an open structure. The RuvB hexamer acts as an ATP-dependent pump, pulling dsDNA into and through the RuvAB complex. HJ branch migration allows RuvC to scan DNA until it finds its consensus sequence, where it cleaves and resolves the cruciform DNA. This chain is Holliday junction branch migration complex subunit RuvA, found in Gluconobacter oxydans (strain 621H) (Gluconobacter suboxydans).